A 107-amino-acid polypeptide reads, in one-letter code: UPF0060 membrane protein Sala_0701 (107 aa).

A run of 4 helical transmembrane segments spans residues 4–24 (FAYI…WAWL), 30–50 (VWWV…LTLV), 60–80 (AAYG…VEGA), and 87–107 (LIGA…PRGG).

The protein belongs to the UPF0060 family.

It is found in the cell inner membrane. In Sphingopyxis alaskensis (strain DSM 13593 / LMG 18877 / RB2256) (Sphingomonas alaskensis), this protein is UPF0060 membrane protein Sala_0701.